A 129-amino-acid polypeptide reads, in one-letter code: Serum amyloid A-1 protein (129 aa).

Residues 1–18 (MKLFTGLIFCSLVLGVSS) form the signal peptide. The interval 19–44 (QWYSFIGEAAQGAWDMYRAYSDMIEA) is important for amyloid formation. The interval 92 to 129 (GDSGHGVEDSKADQAANEWGRSGKDPNHFRPPGLPDKY) is disordered.

This sequence belongs to the SAA family. In terms of assembly, homohexamer; dimer of trimers. Can form amyloid fibrils after partial proteolysis; the native, undenatured protein does not form amyloid fibrils (in vitro). Apolipoprotein of the HDL complex. Binds to heparin. In terms of tissue distribution, detected in liver.

It is found in the secreted. In terms of biological role, major acute phase protein. This is Serum amyloid A-1 protein (SAA1) from Neovison vison (American mink).